A 97-amino-acid polypeptide reads, in one-letter code: Secreted Ly-6/uPAR domain-containing protein 2 (97 aa).

Residues 1–22 (MQLGTGLLLAAVLSLQLAAAEA) form the signal peptide. 5 disulfide bridges follow: Cys-25–Cys-47, Cys-28–Cys-34, Cys-40–Cys-68, Cys-72–Cys-88, and Cys-89–Cys-94. The UPAR/Ly6 domain occupies 25–95 (CHQCTGFGGC…IACCQTSLCN (71 aa)).

In terms of assembly, interacts with CHRNA3, CHRNA4, CHRNA5, CHRNA7, CHRNB2 and CHRNB4. Interacts with CHRM1 and CHRM3 probably in an allosteric manner. As to expression, expressed at highest levels in cervix and esophagus, followed by adult and fetal skin. Expressed at lower levels in brain, lung, stomach, small intestine, colon, rectum, uterus, and thymus. Not detected in spleen nor bone marrow. Up-regulated 3-fold in psoriatic lesional skin. In the epidermis, predominantly produced by keratinocytes of the suprabasal epidermal compartment (at protein level). In attached gingiva, produced at highest levels by basal cells located in the lowermost epithelial layers (at protein level). Detected in serum (at protein level).

Its subcellular location is the secreted. Binds and may modulate the functional properties of nicotinic and muscarinic acetylcholine receptors. May regulate keratinocytes proliferation, differentiation and apoptosis. In vitro moderately inhibits ACh-evoked currents of alpha-3:beta-2-containing nAChRs and strongly these of alpha-4:beta-2-containing nAChRs, modulates alpha-7-containing nAChRs, and inhibits nicotine-induced signaling probably implicating alpha-3:beta-4-containing nAChRs. Proposed to act on alpha-3:beta-2 and alpha-7 nAChRs in an orthosteric, and on mAChRs, such as CHRM1 and CHRM3, in an allosteric manner. In Homo sapiens (Human), this protein is Secreted Ly-6/uPAR domain-containing protein 2.